Consider the following 459-residue polypeptide: Argininosuccinate lyase (459 aa).

The protein belongs to the lyase 1 family. Argininosuccinate lyase subfamily.

The protein resides in the cytoplasm. The enzyme catalyses 2-(N(omega)-L-arginino)succinate = fumarate + L-arginine. It functions in the pathway amino-acid biosynthesis; L-arginine biosynthesis; L-arginine from L-ornithine and carbamoyl phosphate: step 3/3. The chain is Argininosuccinate lyase from Staphylococcus aureus (strain Mu3 / ATCC 700698).